The chain runs to 118 residues: Holo-[acyl-carrier-protein] synthase (118 aa).

Residues Asp-9 and Glu-52 each coordinate Mg(2+).

This sequence belongs to the P-Pant transferase superfamily. AcpS family. Mg(2+) serves as cofactor.

The protein localises to the cytoplasm. It catalyses the reaction apo-[ACP] + CoA = holo-[ACP] + adenosine 3',5'-bisphosphate + H(+). Functionally, transfers the 4'-phosphopantetheine moiety from coenzyme A to a Ser of acyl-carrier-protein. In Frankia casuarinae (strain DSM 45818 / CECT 9043 / HFP020203 / CcI3), this protein is Holo-[acyl-carrier-protein] synthase.